Here is a 235-residue protein sequence, read N- to C-terminus: Pyridoxine 5'-phosphate synthase (235 aa).

Asn6 contributes to the 3-amino-2-oxopropyl phosphate binding site. 8–9 (DH) contributes to the 1-deoxy-D-xylulose 5-phosphate binding site. 3-amino-2-oxopropyl phosphate is bound at residue Arg17. His42 acts as the Proton acceptor in catalysis. Residues Arg44 and His49 each contribute to the 1-deoxy-D-xylulose 5-phosphate site. Catalysis depends on Glu69, which acts as the Proton acceptor. Thr99 is a 1-deoxy-D-xylulose 5-phosphate binding site. Residue His188 is the Proton donor of the active site. 3-amino-2-oxopropyl phosphate is bound by residues Gly189 and 210-211 (GH).

It belongs to the PNP synthase family. As to quaternary structure, homooctamer; tetramer of dimers.

The protein localises to the cytoplasm. The catalysed reaction is 3-amino-2-oxopropyl phosphate + 1-deoxy-D-xylulose 5-phosphate = pyridoxine 5'-phosphate + phosphate + 2 H2O + H(+). Its pathway is cofactor biosynthesis; pyridoxine 5'-phosphate biosynthesis; pyridoxine 5'-phosphate from D-erythrose 4-phosphate: step 5/5. In terms of biological role, catalyzes the complicated ring closure reaction between the two acyclic compounds 1-deoxy-D-xylulose-5-phosphate (DXP) and 3-amino-2-oxopropyl phosphate (1-amino-acetone-3-phosphate or AAP) to form pyridoxine 5'-phosphate (PNP) and inorganic phosphate. In Wolbachia sp. subsp. Drosophila simulans (strain wRi), this protein is Pyridoxine 5'-phosphate synthase.